A 180-amino-acid chain; its full sequence is HTH-type transcriptional regulator EcpR (180 aa).

Residues lysine 122–glutamine 180 enclose the HTH luxR-type domain. The H-T-H motif DNA-binding region spans proline 146–arginine 165.

Belongs to the EcpR/MatA family.

Its subcellular location is the cytoplasm. Functionally, part of the ecpRABCDE operon, which encodes the E.coli common pilus (ECP). ECP plays a dual role in early-stage biofilm development and host cell recognition. Positively regulates the expression of the ecp operon. This is HTH-type transcriptional regulator EcpR (ecpR) from Klebsiella pneumoniae subsp. pneumoniae (strain ATCC 700721 / MGH 78578).